The following is a 269-amino-acid chain: Eukaryotic translation initiation factor 3 subunit G-1 (269 aa).

The 79-residue stretch at A188–P266 folds into the RRM domain.

This sequence belongs to the eIF-3 subunit G family. Component of the eukaryotic translation initiation factor 3 (eIF-3) complex. The eIF-3 complex interacts with pix.

Its subcellular location is the cytoplasm. RNA-binding component of the eukaryotic translation initiation factor 3 (eIF-3) complex, which is involved in protein synthesis of a specialized repertoire of mRNAs and, together with other initiation factors, stimulates binding of mRNA and methionyl-tRNAi to the 40S ribosome. The eIF-3 complex specifically targets and initiates translation of a subset of mRNAs involved in cell proliferation. This subunit can bind 18S rRNA. This Drosophila persimilis (Fruit fly) protein is Eukaryotic translation initiation factor 3 subunit G-1.